The chain runs to 91 residues: Small ribosomal subunit protein uS19 (91 aa).

It belongs to the universal ribosomal protein uS19 family.

Protein S19 forms a complex with S13 that binds strongly to the 16S ribosomal RNA. This chain is Small ribosomal subunit protein uS19, found in Paraburkholderia phymatum (strain DSM 17167 / CIP 108236 / LMG 21445 / STM815) (Burkholderia phymatum).